Reading from the N-terminus, the 559-residue chain is Suppressor of tumorigenicity 7 protein-like (559 aa).

3 helical membrane passes run glycine 39–leucine 59, phenylalanine 83–tryptophan 103, and leucine 513–leucine 533.

The protein belongs to the ST7 family. In terms of tissue distribution, ubiquitously expressed.

The protein resides in the membrane. This is Suppressor of tumorigenicity 7 protein-like (St7l) from Mus musculus (Mouse).